Consider the following 187-residue polypeptide: Thermosensitive gluconokinase (187 aa).

10–17 (GVSGSGKT) lines the ATP pocket.

Belongs to the gluconokinase GntK/GntV family.

The catalysed reaction is D-gluconate + ATP = 6-phospho-D-gluconate + ADP + H(+). It participates in carbohydrate acid metabolism; L-idonate degradation. This chain is Thermosensitive gluconokinase (idnK), found in Escherichia coli (strain K12).